The primary structure comprises 248 residues: Triosephosphate isomerase (248 aa).

Residue 9-11 coordinates substrate; that stretch reads NWK. Residue histidine 94 is the Electrophile of the active site. The active-site Proton acceptor is the glutamate 166. Residues glycine 172, serine 212, and 233–234 each bind substrate; that span reads GG.

It belongs to the triosephosphate isomerase family. In terms of assembly, homodimer.

It is found in the cytoplasm. The catalysed reaction is D-glyceraldehyde 3-phosphate = dihydroxyacetone phosphate. It functions in the pathway carbohydrate biosynthesis; gluconeogenesis. Its pathway is carbohydrate degradation; glycolysis; D-glyceraldehyde 3-phosphate from glycerone phosphate: step 1/1. Involved in the gluconeogenesis. Catalyzes stereospecifically the conversion of dihydroxyacetone phosphate (DHAP) to D-glyceraldehyde-3-phosphate (G3P). The protein is Triosephosphate isomerase of Clostridium acetobutylicum (strain ATCC 824 / DSM 792 / JCM 1419 / IAM 19013 / LMG 5710 / NBRC 13948 / NRRL B-527 / VKM B-1787 / 2291 / W).